An 890-amino-acid chain; its full sequence is Kinesin-like protein KIN-7C, mitochondrial (890 aa).

Over residues 1–13 the composition is skewed to polar residues; sequence MSATRSQRSSTIS. The tract at residues 1-66 is disordered; sequence MSATRSQRSS…TSSAAASSTA (66 aa). The transit peptide at 1-73 directs the protein to the mitochondrion; sequence MSATRSQRSS…STAVASTKLK (73 aa). A compositionally biased stretch (low complexity) spans 40–66; sequence SPVTSSSPLLRSSPSPSTSSAAASSTA. The Kinesin motor domain maps to 75–394; the sequence is NITVTIRFRP…LKFAQRCKHV (320 aa). Residue 155–162 participates in ATP binding; it reads GVTSSGKT. Residues 395–468 are a coiled coil; the sequence is EIKASRNKIM…MGRIQRLTKL (74 aa). A disordered region spans residues 511 to 595; it reads DGAVSTVSEH…TTRRENAAAI (85 aa). Residues 569–579 show a composition bias toward low complexity; the sequence is SQASGSPSSSS. Coiled-coil stretches lie at residues 664-693 and 729-765; these read HIRD…IIEI and ADNR…LAER. Residues 768–797 form a disordered region; that stretch reads TQQIAGDESSGKNIHNRNGEESEIYSGAGT. Residues 818 to 884 adopt a coiled-coil conformation; it reads NETALNSQAL…AEEVTRLCNE (67 aa).

This sequence belongs to the TRAFAC class myosin-kinesin ATPase superfamily. Kinesin family. KIN-7 subfamily.

Its subcellular location is the mitochondrion. The protein is Kinesin-like protein KIN-7C, mitochondrial of Arabidopsis thaliana (Mouse-ear cress).